A 453-amino-acid chain; its full sequence is Phosphoglucosamine mutase (453 aa).

Serine 105 serves as the catalytic Phosphoserine intermediate. The Mg(2+) site is built by serine 105, aspartate 244, aspartate 246, and aspartate 248. Position 105 is a phosphoserine (serine 105).

The protein belongs to the phosphohexose mutase family. Mg(2+) serves as cofactor. In terms of processing, activated by phosphorylation.

It carries out the reaction alpha-D-glucosamine 1-phosphate = D-glucosamine 6-phosphate. Catalyzes the conversion of glucosamine-6-phosphate to glucosamine-1-phosphate. The polypeptide is Phosphoglucosamine mutase (Blochmanniella pennsylvanica (strain BPEN)).